The chain runs to 28 residues: 3-phytase B (28 aa).

The segment at 1-28 is disordered; the sequence is RDPTGCEVDQVIMVKRHGERYPSPSAGK. The Nucleophile role is filled by histidine 17.

It belongs to the histidine acid phosphatase family.

It carries out the reaction 1D-myo-inositol hexakisphosphate + H2O = 1D-myo-inositol 1,2,4,5,6-pentakisphosphate + phosphate. In terms of biological role, catalyzes the hydrolysis of inorganic orthophosphate from phytate. The sequence is that of 3-phytase B (phyB) from Aspergillus ficuum.